The sequence spans 347 residues: Ornithine carbamoyltransferase (347 aa).

Carbamoyl phosphate contacts are provided by residues 56-59 (STRT), Gln83, Arg107, and 134-137 (HPTQ). L-ornithine contacts are provided by residues Asn168, Asp232, and 236 to 237 (SM). Carbamoyl phosphate-binding positions include 274 to 275 (CL) and Arg320.

Belongs to the aspartate/ornithine carbamoyltransferase superfamily. OTCase family.

The protein localises to the cytoplasm. It catalyses the reaction carbamoyl phosphate + L-ornithine = L-citrulline + phosphate + H(+). Its function is as follows. Reversibly catalyzes the transfer of the carbamoyl group from carbamoyl phosphate (CP) to the N(epsilon) atom of ornithine (ORN) to produce L-citrulline. The polypeptide is Ornithine carbamoyltransferase (Blochmanniella floridana).